Consider the following 38-residue polypeptide: Photosystem II reaction center protein L (38 aa).

The chain crosses the membrane as a helical span at residues 17-37 (SLFWGLLLIFVLAILFSNYFF).

It belongs to the PsbL family. PSII is composed of 1 copy each of membrane proteins PsbA, PsbB, PsbC, PsbD, PsbE, PsbF, PsbH, PsbI, PsbJ, PsbK, PsbL, PsbM, PsbT, PsbX, PsbY, PsbZ, Psb30/Ycf12, at least 3 peripheral proteins of the oxygen-evolving complex and a large number of cofactors. It forms dimeric complexes.

It localises to the plastid. It is found in the chloroplast thylakoid membrane. One of the components of the core complex of photosystem II (PSII). PSII is a light-driven water:plastoquinone oxidoreductase that uses light energy to abstract electrons from H(2)O, generating O(2) and a proton gradient subsequently used for ATP formation. It consists of a core antenna complex that captures photons, and an electron transfer chain that converts photonic excitation into a charge separation. This subunit is found at the monomer-monomer interface and is required for correct PSII assembly and/or dimerization. The polypeptide is Photosystem II reaction center protein L (Chara vulgaris (Common stonewort)).